We begin with the raw amino-acid sequence, 437 residues long: Probable carboxypeptidase HCBG_00059 (437 aa).

An N-terminal signal peptide occupies residues 1-20 (MKLSNLAALLSASTVAPVAA). Asn-153 is a glycosylation site (N-linked (GlcNAc...) asparagine). Asp-163 contributes to the Zn(2+) binding site. Glu-195 serves as the catalytic Proton acceptor. A Zn(2+)-binding site is contributed by Glu-196. Residue Asn-346 is glycosylated (N-linked (GlcNAc...) asparagine).

It belongs to the peptidase M20A family. It depends on Zn(2+) as a cofactor.

The protein localises to the secreted. The polypeptide is Probable carboxypeptidase HCBG_00059 (Ajellomyces capsulatus (strain G186AR / H82 / ATCC MYA-2454 / RMSCC 2432) (Darling's disease fungus)).